Here is a 375-residue protein sequence, read N- to C-terminus: Adiponectin receptor protein 1 (375 aa).

The segment at 1 to 60 (MSSHKGSAGAQGNGAPSGNREADTVELAELGPLLEEKGKRAASSPAKAEEDQACPVPQEE) is disordered. At 1-136 (MSSHKGSAGA…SIFRIHTETG (136 aa)) the chain is on the cytoplasmic side. The helical transmembrane segment at 137–157 (NIWTHLLGFVLFLFLGILTML) threads the bilayer. Residues 158 to 170 (RPNMYFMAPLQEK) are Extracellular-facing. A helical transmembrane segment spans residues 171-191 (VVFGMFFLGAVLCLSFSWLFH). His191 is a Zn(2+) binding site. The Cytoplasmic segment spans residues 192–203 (TVYCHSEKVSRT). Residues 204–224 (FSKLDYSGIALLIMGSFVPWL) traverse the membrane as a helical segment. Residues 225–234 (YYSFYCSPQP) are Extracellular-facing. Residues 235 to 255 (RLIYLSIVCVLGISAIIVAQW) traverse the membrane as a helical segment. Over 256–264 (DRFATPKHR) the chain is Cytoplasmic. Residues 265 to 285 (QTRAGVFLGLGLSGVVPTMHF) traverse the membrane as a helical segment. At 286–298 (TIAEGFVKATTVG) the chain is on the extracellular side. The helical transmembrane segment at 299 to 319 (QMGWFFLMAVMYITGAGLYAA) threads the bilayer. Topologically, residues 320–337 (RIPERFFPGKFDIWFQSH) are cytoplasmic. 2 residues coordinate Zn(2+): His337 and His341. The chain crosses the membrane as a helical span at residues 338–358 (QIFHVLVVAAAFVHFYGVSNL). Over 359-375 (QEFRYGLEGGCTDDSLL) the chain is Extracellular.

Belongs to the ADIPOR family. May form homooligomers and heterooligomers with ADIPOR2. Interacts with APPL2 (via BAR domain); hinders the accessibility of APPL1 to ADIPOR1; negatively regulates adiponectin signaling; ADIPOQ dissociates this interaction and facilitates the recruitment of APPL1 to ADIPOR1. Interacts with APPL1; ADIPOQ enhances this interaction; inhibites adiponectin-stimulated binding of APPL2 to ADIPOR1. In terms of tissue distribution, detected in brain and quadriceps muscle (at protein level). Widely expressed. Expressed in heart, kidney, liver, lung, skeletal muscle, white adipose tissue, brown adipose tissue, aorta and spleen. Weakly expressed in brain and testis.

It localises to the cell membrane. Its function is as follows. Receptor for ADIPOQ, an essential hormone secreted by adipocytes that regulates glucose and lipid metabolism. Required for normal glucose and fat homeostasis and for maintaining a normal body weight. ADIPOQ-binding activates a signaling cascade that leads to increased AMPK activity, and ultimately to increased fatty acid oxidation, increased glucose uptake and decreased gluconeogenesis. Has high affinity for globular adiponectin and low affinity for full-length adiponectin. The sequence is that of Adiponectin receptor protein 1 from Mus musculus (Mouse).